Reading from the N-terminus, the 376-residue chain is Chaperone protein DnaJ (376 aa).

One can recognise a J domain in the interval 5–70 (DYYEVLGVKK…QKRAAYDQYG (66 aa)). The CR-type zinc finger occupies 131–209 (GVTKEIRIPT…CHGHGRVEKS (79 aa)). Positions 144, 147, 161, 164, 183, 186, 197, and 200 each coordinate Zn(2+). CXXCXGXG motif repeat units lie at residues 144 to 151 (CDVCHGSG), 161 to 168 (CSTCRGAG), 183 to 190 (CPTCHGSG), and 197 to 204 (CNKCHGHG).

The protein belongs to the DnaJ family. In terms of assembly, homodimer. Zn(2+) is required as a cofactor.

The protein localises to the cytoplasm. Its function is as follows. Participates actively in the response to hyperosmotic and heat shock by preventing the aggregation of stress-denatured proteins and by disaggregating proteins, also in an autonomous, DnaK-independent fashion. Unfolded proteins bind initially to DnaJ; upon interaction with the DnaJ-bound protein, DnaK hydrolyzes its bound ATP, resulting in the formation of a stable complex. GrpE releases ADP from DnaK; ATP binding to DnaK triggers the release of the substrate protein, thus completing the reaction cycle. Several rounds of ATP-dependent interactions between DnaJ, DnaK and GrpE are required for fully efficient folding. Also involved, together with DnaK and GrpE, in the DNA replication of plasmids through activation of initiation proteins. This Yersinia enterocolitica serotype O:8 / biotype 1B (strain NCTC 13174 / 8081) protein is Chaperone protein DnaJ.